A 251-amino-acid chain; its full sequence is Ditrans,polycis-undecaprenyl-diphosphate synthase ((2E,6E)-farnesyl-diphosphate specific) (251 aa).

Aspartate 29 is a catalytic residue. Aspartate 29 contributes to the Mg(2+) binding site. Residues 30–33 (GNGK), tryptophan 34, arginine 42, histidine 46, and 74–76 (SSD) each bind substrate. Asparagine 77 functions as the Proton acceptor in the catalytic mechanism. Substrate is bound by residues tryptophan 78, arginine 80, arginine 197, and 203–205 (RLS). A Mg(2+)-binding site is contributed by glutamate 216.

This sequence belongs to the UPP synthase family. In terms of assembly, homodimer. It depends on Mg(2+) as a cofactor.

It catalyses the reaction 8 isopentenyl diphosphate + (2E,6E)-farnesyl diphosphate = di-trans,octa-cis-undecaprenyl diphosphate + 8 diphosphate. Its function is as follows. Catalyzes the sequential condensation of isopentenyl diphosphate (IPP) with (2E,6E)-farnesyl diphosphate (E,E-FPP) to yield (2Z,6Z,10Z,14Z,18Z,22Z,26Z,30Z,34E,38E)-undecaprenyl diphosphate (di-trans,octa-cis-UPP). UPP is the precursor of glycosyl carrier lipid in the biosynthesis of bacterial cell wall polysaccharide components such as peptidoglycan and lipopolysaccharide. The protein is Ditrans,polycis-undecaprenyl-diphosphate synthase ((2E,6E)-farnesyl-diphosphate specific) of Buchnera aphidicola subsp. Baizongia pistaciae (strain Bp).